The following is a 442-amino-acid chain: Syndecan-3 (442 aa).

2 disordered regions span residues 1–25 and 55–85; these read MKPGPPRRGTAQGQRVDTATHGPGA and RPVDLEGSGDDDSFPDDELDDLYSGSGSGYF. The first 44 residues, 1–44, serve as a signal peptide directing secretion; it reads MKPGPPRRGTAQGQRVDTATHGPGARGLLLPPLLLLLLAGRAAG. Topologically, residues 45–387 are extracellular; sequence AQRWRNENFE…SILERKEVLV (343 aa). Residues 61–75 show a composition bias toward acidic residues; sequence GSGDDDSFPDDELDD. 4 O-linked (Xyl...) (glycosaminoglycan) serine glycosylation sites follow: Ser-78, Ser-80, Ser-82, and Ser-89. Thr-107 carries O-linked (GalNAc) threonine; by GALNT13 glycosylation. Disordered regions lie at residues 151–175, 180–199, 225–244, 252–327, and 339–372; these read EEPSQRATTISTTTSTTAATTTGAP, APATAATTAPSTPAAPPATA, ATTPAVPSPPTTVTTLDTEA, TATS…TTQP, and AAAKPSPPLGTLPKGARPGLGLHDNAIDSGSSAA. Over residues 157–175 the composition is skewed to low complexity; it reads ATTISTTTSTTAATTTGAP. Ser-161 carries an O-linked (GalNAc) serine; by GALNT13 glycan. 4 O-linked (GalNAc) threonine; by GALNT13 glycosylation sites follow: Thr-162, Thr-163, Thr-170, and Thr-172. Low complexity predominate over residues 276–287; the sequence is TLPLGTTAPGPT. The segment covering 289 to 303 has biased composition (polar residues); the sequence is VAQTPTPESLLTTTQ. Residues Ser-315 and Ser-367 are each glycosylated (O-linked (Xyl...) (glycosaminoglycan) serine). The chain crosses the membrane as a helical span at residues 388 to 408; that stretch reads AVIVGGVVGALFAAFLVTLLI. Phosphotyrosine is present on residues Tyr-409, Tyr-419, Tyr-431, and Tyr-441. The Cytoplasmic segment spans residues 409-442; the sequence is YRMKKKDEGSYTLEEPKQASVTYQKPDKQEEFYA. Positions 419 to 442 are disordered; that stretch reads YTLEEPKQASVTYQKPDKQEEFYA. Residues 433 to 442 show a composition bias toward basic and acidic residues; the sequence is KPDKQEEFYA.

Belongs to the syndecan proteoglycan family. Interacts with TIAM1. Interacts (via heparan sulfate chains) with PTN; this interaction mediates the neurite outgrowth-promoting signal from PTN to the cytoskeleton of growing neurites; this interaction mediates osteoblast recruitment. Interacts with MDK; this interaction induces SDC3 clustering; this interaction induces neuronal cell adhesion and neurite outgrowth. In terms of processing, O-glycosylated within the Thr/Ser-rich region which could interact with lectin domains on other molecules. In terms of tissue distribution, high levels in neonatal brain, heart, and Schwann cells, barely detectable in neonatal or adult liver, or adult brain.

Its subcellular location is the cell membrane. Functionally, cell surface proteoglycan that may bear heparan sulfate. May have a role in the organization of cell shape by affecting the actin cytoskeleton, possibly by transferring signals from the cell surface in a sugar-dependent mechanism. This chain is Syndecan-3 (Sdc3), found in Rattus norvegicus (Rat).